A 181-amino-acid polypeptide reads, in one-letter code: Regulator of G-protein signaling 10 (181 aa).

The tract at residues 1–35 (MFTRAVSRLSRKRPPSDIHDGDGSSSSGHQSLKST) is disordered. 2 positions are modified to phosphoserine: Ser24 and Ser41. Residues 41–156 (SLENLLEDPE…LKSDLFLKPK (116 aa)) enclose the RGS domain. A lipid anchor (S-palmitoyl cysteine) is attached at Cys74. The interval 155-181 (PKRTEEEEEEPPDAQTAAKRASRIYNT) is disordered. Position 176 is a phosphoserine (Ser176).

As to quaternary structure, interacts with GNAZ, GNAI1 and GNAI3. Associates specifically with the activated, GTP-bound forms of GNAZ and GNAI3.

The protein localises to the cytoplasm. The protein resides in the cytosol. It is found in the nucleus. Regulates G protein-coupled receptor signaling cascades, including signaling downstream of the muscarinic acetylcholine receptor CHRM2. Inhibits signal transduction by increasing the GTPase activity of G protein alpha subunits, thereby driving them into their inactive GDP-bound form. Modulates the activity of potassium channels that are activated in response to CHRM2 signaling. Activity on GNAZ is inhibited by palmitoylation of the G-protein. This Mus musculus (Mouse) protein is Regulator of G-protein signaling 10 (Rgs10).